The following is a 99-amino-acid chain: MALTKAEMSEYLFDKLGLSKRDAKELVELFFEEIRRALENGEQVKLSGFGNFDLRDKNQRPGRNPKTGEDIPITARRVVTFRPGQKLKSRVENAAPKEE.

Residues 49-75 (FGNFDLRDKNQRPGRNPKTGEDIPITA) are disordered.

The protein belongs to the bacterial histone-like protein family. In terms of assembly, heterodimer of an alpha and a beta chain.

In terms of biological role, this protein is one of the two subunits of integration host factor, a specific DNA-binding protein that functions in genetic recombination as well as in transcriptional and translational control. This chain is Integration host factor subunit alpha, found in Salmonella arizonae (strain ATCC BAA-731 / CDC346-86 / RSK2980).